Here is a 1058-residue protein sequence, read N- to C-terminus: Carbamoyl phosphate synthase large chain (1058 aa).

The carboxyphosphate synthetic domain stretch occupies residues 1 to 401 (MPKRTDIKKI…SLLKACRSLE (401 aa)). Residues arginine 129, arginine 169, glycine 175, glycine 176, lysine 208, isoleucine 210, glutamate 215, glycine 241, isoleucine 242, histidine 243, glutamine 284, and glutamate 298 each contribute to the ATP site. The 195-residue stretch at 133 to 327 (KALMKALKQP…IAKIAAKIAI (195 aa)) folds into the ATP-grasp 1 domain. Residues glutamine 284, glutamate 298, and asparagine 300 each coordinate Mg(2+). Residues glutamine 284, glutamate 298, and asparagine 300 each contribute to the Mn(2+) site. The interval 402-546 (IGIYHNECKE…YSTYAFENES (145 aa)) is oligomerization domain. The carbamoyl phosphate synthetic domain stretch occupies residues 547 to 929 (QASPNKSILV…ALYKAFEASY (383 aa)). An ATP-grasp 2 domain is found at 671-861 (EKALHDINIP…MAQVATKLIL (191 aa)). Residues arginine 707, serine 746, isoleucine 748, glutamate 752, glycine 777, valine 778, histidine 779, serine 780, glutamine 820, and glutamate 832 each contribute to the ATP site. Positions 820, 832, and 834 each coordinate Mg(2+). The Mn(2+) site is built by glutamine 820, glutamate 832, and asparagine 834. The MGS-like domain maps to 930–1058 (MHVPDFGNII…ESRSFSIQSL (129 aa)). Positions 930 to 1058 (MHVPDFGNII…ESRSFSIQSL (129 aa)) are allosteric domain.

This sequence belongs to the CarB family. Composed of two chains; the small (or glutamine) chain promotes the hydrolysis of glutamine to ammonia, which is used by the large (or ammonia) chain to synthesize carbamoyl phosphate. Tetramer of heterodimers (alpha,beta)4. Mg(2+) is required as a cofactor. It depends on Mn(2+) as a cofactor.

It carries out the reaction hydrogencarbonate + L-glutamine + 2 ATP + H2O = carbamoyl phosphate + L-glutamate + 2 ADP + phosphate + 2 H(+). The enzyme catalyses hydrogencarbonate + NH4(+) + 2 ATP = carbamoyl phosphate + 2 ADP + phosphate + 2 H(+). It functions in the pathway amino-acid biosynthesis; L-arginine biosynthesis; carbamoyl phosphate from bicarbonate: step 1/1. Its pathway is pyrimidine metabolism; UMP biosynthesis via de novo pathway; (S)-dihydroorotate from bicarbonate: step 1/3. Large subunit of the glutamine-dependent carbamoyl phosphate synthetase (CPSase). CPSase catalyzes the formation of carbamoyl phosphate from the ammonia moiety of glutamine, carbonate, and phosphate donated by ATP, constituting the first step of 2 biosynthetic pathways, one leading to arginine and/or urea and the other to pyrimidine nucleotides. The large subunit (synthetase) binds the substrates ammonia (free or transferred from glutamine from the small subunit), hydrogencarbonate and ATP and carries out an ATP-coupled ligase reaction, activating hydrogencarbonate by forming carboxy phosphate which reacts with ammonia to form carbamoyl phosphate. This Streptococcus uberis (strain ATCC BAA-854 / 0140J) protein is Carbamoyl phosphate synthase large chain.